A 130-amino-acid polypeptide reads, in one-letter code: Phosphoribosyl-AMP cyclohydrolase 1 (130 aa).

Residue Asp-77 participates in Mg(2+) binding. Zn(2+) is bound at residue Cys-78. Mg(2+) contacts are provided by Asp-79 and Asp-81. Zn(2+) is bound by residues Cys-95 and Cys-102.

Belongs to the PRA-CH family. Homodimer. Requires Mg(2+) as cofactor. The cofactor is Zn(2+).

It localises to the cytoplasm. It carries out the reaction 1-(5-phospho-beta-D-ribosyl)-5'-AMP + H2O = 1-(5-phospho-beta-D-ribosyl)-5-[(5-phospho-beta-D-ribosylamino)methylideneamino]imidazole-4-carboxamide. It functions in the pathway amino-acid biosynthesis; L-histidine biosynthesis; L-histidine from 5-phospho-alpha-D-ribose 1-diphosphate: step 3/9. Its function is as follows. Catalyzes the hydrolysis of the adenine ring of phosphoribosyl-AMP. This chain is Phosphoribosyl-AMP cyclohydrolase 1, found in Pseudomonas fluorescens (strain ATCC BAA-477 / NRRL B-23932 / Pf-5).